We begin with the raw amino-acid sequence, 492 residues long: Ketol-acid reductoisomerase (NADP(+)) (492 aa).

The KARI N-terminal Rossmann domain occupies 17–208; the sequence is LGQCRLMKKN…GSNKAGVLES (192 aa). NADP(+)-binding positions include 45–48, arginine 68, serine 76, and serine 78; that span reads CGSQ. Residue histidine 132 is part of the active site. Glycine 158 serves as a coordination point for NADP(+). 2 KARI C-terminal knotted domains span residues 209–344 and 345–487; these read SFVA…KAPV and YCET…MKDM. Mg(2+)-binding residues include aspartate 217, glutamate 221, glutamate 389, and glutamate 393. Residue serine 414 participates in substrate binding.

This sequence belongs to the ketol-acid reductoisomerase family. It depends on Mg(2+) as a cofactor.

It catalyses the reaction (2R)-2,3-dihydroxy-3-methylbutanoate + NADP(+) = (2S)-2-acetolactate + NADPH + H(+). The enzyme catalyses (2R,3R)-2,3-dihydroxy-3-methylpentanoate + NADP(+) = (S)-2-ethyl-2-hydroxy-3-oxobutanoate + NADPH + H(+). It participates in amino-acid biosynthesis; L-isoleucine biosynthesis; L-isoleucine from 2-oxobutanoate: step 2/4. It functions in the pathway amino-acid biosynthesis; L-valine biosynthesis; L-valine from pyruvate: step 2/4. Involved in the biosynthesis of branched-chain amino acids (BCAA). Catalyzes an alkyl-migration followed by a ketol-acid reduction of (S)-2-acetolactate (S2AL) to yield (R)-2,3-dihydroxy-isovalerate. In the isomerase reaction, S2AL is rearranged via a Mg-dependent methyl migration to produce 3-hydroxy-3-methyl-2-ketobutyrate (HMKB). In the reductase reaction, this 2-ketoacid undergoes a metal-dependent reduction by NADPH to yield (R)-2,3-dihydroxy-isovalerate. This Blochmanniella floridana protein is Ketol-acid reductoisomerase (NADP(+)).